The following is a 424-amino-acid chain: Putative ankyrin repeat protein R858 (424 aa).

ANK repeat units lie at residues 115–144 (HLMC…FTKR), 147–177 (TDHT…SDYF), 184–215 (INDS…SINY), and 219–252 (TGST…DIHE).

The sequence is that of Putative ankyrin repeat protein R858 from Acanthamoeba polyphaga (Amoeba).